Here is an 899-residue protein sequence, read N- to C-terminus: Plasma membrane ATPase (899 aa).

Positions 1–72 are disordered; the sequence is MSAATEPTKE…TDPSYGLTSD (72 aa). Over 1-96 the chain is Cytoplasmic; sequence MSAATEPTKE…SEETENLFVK (96 aa). The segment covering 17 to 29 has biased composition (acidic residues); it reads DSDDEDEDIDQLI. The helical transmembrane segment at 97–117 threads the bilayer; the sequence is FLMFFIGPIQFVMEAAAILAA. The Extracellular segment spans residues 118–121; that stretch reads GLED. Residues 122-141 traverse the membrane as a helical segment; it reads WVDFGVICGLLFLNAAVGFI. At 142–272 the chain is on the cytoplasmic side; it reads QEYQAGSIVD…GSGHFTEVLN (131 aa). Residues 273 to 294 form a helical membrane-spanning segment; that stretch reads GIGTILLILVIVTLLLVWVASF. Topologically, residues 295-305 are extracellular; that stretch reads YRTNKIVRILR. A helical transmembrane segment spans residues 306 to 328; sequence YTLAITIVGVPVGLPAVVTTTMA. The Cytoplasmic portion of the chain corresponds to 329–700; that stretch reads VGAAYLAKKQ…IAILNRSLNI (372 aa). Aspartate 359 serves as the catalytic 4-aspartylphosphate intermediate. Positions 615 and 619 each coordinate Mg(2+). Residues 701 to 719 form a helical membrane-spanning segment; that stretch reads DLVVFIAIFADVATLAIAY. The Extracellular portion of the chain corresponds to 720-735; sequence DNAPYSPKPVKWNLRR. The helical transmembrane segment at 736–755 threads the bilayer; that stretch reads LWGMSVILGIILAIGTWITL. Over 756–805 the chain is Cytoplasmic; the sequence is TTMFVPKGGIIQNFGSIDGVLFLQISLTENWLIFITRAAGPFWSSIPSWQ. The chain crosses the membrane as a helical span at residues 806–826; sequence LSGAVLIVDIIATMFCLFGWW. Residues 827–838 are Extracellular-facing; that stretch reads SQNWNDIVTVVR. A helical transmembrane segment spans residues 839–855; the sequence is VWIFSFGVFCVMGGAYY. Residues 856-899 lie on the Cytoplasmic side of the membrane; sequence MMSESEAFDRFMNGKSRRDKPSGRSVEDFLMAMQRVSTQHEKEN.

Belongs to the cation transport ATPase (P-type) (TC 3.A.3) family. Type IIIA subfamily.

The protein resides in the cell membrane. The enzyme catalyses ATP + H2O + H(+)(in) = ADP + phosphate + 2 H(+)(out). Its activity is regulated as follows. Activated by high pH or also by potassium ions when the medium pH is low. In terms of biological role, the plasma membrane ATPase of plants and fungi is a hydrogen ion pump. The proton gradient it generates drives the active transport of nutrients by H(+)-symport. The resulting external acidification and/or internal alkinization may mediate growth responses. The sequence is that of Plasma membrane ATPase (PMA1) from Kluyveromyces lactis (strain ATCC 8585 / CBS 2359 / DSM 70799 / NBRC 1267 / NRRL Y-1140 / WM37) (Yeast).